The chain runs to 278 residues: Large ribosomal subunit protein uL2 (278 aa).

Disordered regions lie at residues 27–58 (STPE…GGGH) and 224–278 (VVMN…GKKR). Residues 37-58 (LHGKGGRNAHGRITTRHKGGGH) show a composition bias toward basic residues. A compositionally biased stretch (basic and acidic residues) spans 253–268 (PEGRTRKPNKPSDKLI). Residues 269-278 (VRRRRTGKKR) are compositionally biased toward basic residues.

Belongs to the universal ribosomal protein uL2 family. In terms of assembly, part of the 50S ribosomal subunit. Forms a bridge to the 30S subunit in the 70S ribosome.

Its function is as follows. One of the primary rRNA binding proteins. Required for association of the 30S and 50S subunits to form the 70S ribosome, for tRNA binding and peptide bond formation. It has been suggested to have peptidyltransferase activity; this is somewhat controversial. Makes several contacts with the 16S rRNA in the 70S ribosome. This chain is Large ribosomal subunit protein uL2, found in Mycobacterium sp. (strain KMS).